The sequence spans 302 residues: Phosphoribosylaminoimidazole-succinocarboxamide synthase (302 aa).

The protein belongs to the SAICAR synthetase family.

It carries out the reaction 5-amino-1-(5-phospho-D-ribosyl)imidazole-4-carboxylate + L-aspartate + ATP = (2S)-2-[5-amino-1-(5-phospho-beta-D-ribosyl)imidazole-4-carboxamido]succinate + ADP + phosphate + 2 H(+). The protein operates within purine metabolism; IMP biosynthesis via de novo pathway; 5-amino-1-(5-phospho-D-ribosyl)imidazole-4-carboxamide from 5-amino-1-(5-phospho-D-ribosyl)imidazole-4-carboxylate: step 1/2. This chain is Phosphoribosylaminoimidazole-succinocarboxamide synthase, found in Ralstonia nicotianae (strain ATCC BAA-1114 / GMI1000) (Ralstonia solanacearum).